Here is a 153-residue protein sequence, read N- to C-terminus: ORM1-like protein 3 (153 aa).

The important for ceramide level-sensing stretch occupies residues 1-17; it reads MNVGTAHSEVNPNTRVM. Topologically, residues 1 to 21 are cytoplasmic; that stretch reads MNVGTAHSEVNPNTRVMNSRG. 2 helical membrane-spanning segments follow: residues 22-42 and 43-63; these read IWLS…SIPF and VSVP…MYIF. Topologically, residues 64–94 are cytoplasmic; the sequence is LHTVKGTPFETPDQGKARLLTHWEQMDYGVQ. The helical transmembrane segment at 95–117 threads the bilayer; it reads FTASRKFLTITPIVLYFLTSFYT. Over 118–121 the chain is Extracellular; it reads KYDQ. The chain crosses the membrane as a helical span at residues 122–142; that stretch reads VHFILNTVSLMSVLIPKLPQL. A Hydroxyproline modification is found at Pro-137. At 143–153 the chain is on the cytoplasmic side; that stretch reads HGVRIFGINKY.

This sequence belongs to the ORM family. Ceramide-sensitive subunit of the serine palmitoyltransferase (SPT) complex, which is also composed of SPTLC1, SPTLC2/3 and SPTSSA/B. In terms of processing, when hydroxylated at Pro-137, ubiquitinated via 'Lys-48'-linkage, leading to proteasomal degradation. In endothelial cells, ORMDL3 proteasomal degradation is controlled by the sphingosine 1-phosphate receptor signaling pathway.

The protein localises to the endoplasmic reticulum membrane. In terms of biological role, plays an essential role in the homeostatic regulation of sphingolipid de novo biosynthesis by modulating the activity of the serine palmitoyltransferase (SPT) in response to ceramide levels. When complexed to SPT, the binding of ceramides to its N-terminus stabilizes a conformation that block SPT substrate entry, hence preventing SPT catalytic activity. Through this mechanism, maintains ceramide levels at sufficient concentrations for the production of complex sphingolipids, but which prevents the accumulation of ceramides to levels that trigger apoptosis. This is ORM1-like protein 3 (Ormdl3) from Rattus norvegicus (Rat).